A 189-amino-acid chain; its full sequence is Phomopsin biosynthesis cluster protein C' (189 aa).

This sequence belongs to the oryJ family.

Part of the gene cluster that mediates the biosynthesis of the phomopsins, a group of hexapeptide mycotoxins which infects lupins and causes lupinosis disease in livestock. The role of phomC' within the phomopsins biosynthesis pathway has still to be determined. The pathway starts with the processing of the precursor phomA by several endopeptidases including kexin proteases as well as the cluster-specific S41 family peptidase phomP1 and the oligopeptidase phomG to produce 10 identical copies of the hexapeptide Tyr-Val-Ile-Pro-Ile-Asp. After being excised from the precursor peptide, the core peptides are cyclized and modified post-translationally by enzymes encoded within the gene cluster. The timing and order of proteolysis of the phomA precursor and PTMs are still unknown. Two tyrosinase-like enzymes, phomQ1 and phomQ2, catalyze the chlorination and hydroxylation of Tyr, respectively. PhomYb, is proposed to be involved in the construction of the macrocyclic structure. The other 4 ustYa family proteins may be involved in PTMs that generate the unique structure of phomopsin A. PhomYa is required for the hydroxylation of C-beta of Tyr. PhomYc, phomYd, and phomYe are responsible for the biosynthesis of 2,3-dehydroisoleucine (dIle), 2,3-dehydroaspartic acid (dAsp), and 3,4-dehydroproline (dPro), respectively. While dIle formation by phomYc is indispensable for the installation of dAsp by phomYd, the order of the other PTMs have not been elucidated yet. Most of the biosynthetic enzymes likely have broad substrate specificity, and thus, there might be a metabolic grid from a precursor to phomopsin A. The enzyme(s) responsible for the biosynthesis of 3,4-dehydrovaline (dVal) have also not been identified yet. Finally, phomM acts as an S-adenosylmethionine-dependent alpha-N-methyltransferase that catalyzes two successive N-methylation reactions, converting N-desmethyl-phomopsin A to phomopsin A and phomopsin A further to an N,N-dimethylated congener called phomopsin E. In Diaporthe leptostromiformis (Lupinosis disease fungus), this protein is Phomopsin biosynthesis cluster protein C'.